The primary structure comprises 104 residues: Small ribosomal subunit protein uS10 (104 aa).

The protein belongs to the universal ribosomal protein uS10 family. As to quaternary structure, part of the 30S ribosomal subunit.

In terms of biological role, involved in the binding of tRNA to the ribosomes. The chain is Small ribosomal subunit protein uS10 from Aquifex aeolicus (strain VF5).